The primary structure comprises 256 residues: Protein US2 homolog (256 aa).

Disordered stretches follow at residues 100-120 (TRRP…SPPP), 167-186 (STAA…RRRP), and 236-256 (VRRR…CTIS). Over residues 167-180 (STAAGAPGAPTGAR) the composition is skewed to low complexity. Positions 245-256 (NGRERAPRCTIS) are enriched in basic and acidic residues.

Belongs to the herpesviridae US2 family.

In Sus scrofa (Pig), this protein is Protein US2 homolog (28K).